We begin with the raw amino-acid sequence, 258 residues long: DNA repair protein RecO (258 aa).

The protein belongs to the RecO family.

Involved in DNA repair and RecF pathway recombination. The protein is DNA repair protein RecO of Oceanobacillus iheyensis (strain DSM 14371 / CIP 107618 / JCM 11309 / KCTC 3954 / HTE831).